A 345-amino-acid chain; its full sequence is UPF0324 membrane protein Cgl0015/cg0018 (345 aa).

10 consecutive transmembrane segments (helical) span residues 15–37 (LRTG…VLIA), 44–66 (FSGV…LIQL), 81–103 (LLRL…SLGF), 105–124 (MLAV…ILMG), 134–156 (VLLI…EGVT), 163–185 (VVTA…PFAT), 205–227 (EIAQ…AVVV), 261–280 (VVPL…STVA), 285–307 (VIAA…LGCG), and 320–342 (PFIL…TLLT).

The protein belongs to the UPF0324 family.

The protein resides in the cell membrane. This chain is UPF0324 membrane protein Cgl0015/cg0018, found in Corynebacterium glutamicum (strain ATCC 13032 / DSM 20300 / JCM 1318 / BCRC 11384 / CCUG 27702 / LMG 3730 / NBRC 12168 / NCIMB 10025 / NRRL B-2784 / 534).